The sequence spans 459 residues: Hypotaurine/taurine--pyruvate aminotransferase (459 aa).

Lys-287 is subject to N6-(pyridoxal phosphate)lysine.

Belongs to the class-III pyridoxal-phosphate-dependent aminotransferase family. Pyridoxal 5'-phosphate serves as cofactor.

The catalysed reaction is hypotaurine + pyruvate = 2-sulfinoacetaldehyde + L-alanine. It carries out the reaction taurine + pyruvate = sulfoacetaldehyde + L-alanine. It functions in the pathway organosulfur degradation. Functionally, converts hypotaurine to alanine and sulfinoacetaldehyde, which desulfinates spontaneously to acetaldehyde and sulfite. Can also catalyze the degradation of taurine into alanine and sulfoacetaldehyde, which is stable. Has 2-fold higher aminotransferase activity with hypotaurine as the substrate. The sequence is that of Hypotaurine/taurine--pyruvate aminotransferase from Paracoccus denitrificans (strain Pd 1222).